Here is a 465-residue protein sequence, read N- to C-terminus: UDP-N-acetylmuramate--L-alanine ligase (465 aa).

114-120 provides a ligand contact to ATP; that stretch reads GAHGKTT.

The protein belongs to the MurCDEF family.

The protein resides in the cytoplasm. It carries out the reaction UDP-N-acetyl-alpha-D-muramate + L-alanine + ATP = UDP-N-acetyl-alpha-D-muramoyl-L-alanine + ADP + phosphate + H(+). It participates in cell wall biogenesis; peptidoglycan biosynthesis. Functionally, cell wall formation. In Syntrophomonas wolfei subsp. wolfei (strain DSM 2245B / Goettingen), this protein is UDP-N-acetylmuramate--L-alanine ligase.